A 422-amino-acid polypeptide reads, in one-letter code: Biofilm regulator 1 (422 aa).

Composition is skewed to low complexity over residues methionine 1–alanine 19 and serine 36–serine 45. 2 disordered regions span residues methionine 1 to proline 86 and arginine 116 to proline 207. The segment covering alanine 46–isoleucine 61 has biased composition (polar residues). 2 stretches are compositionally biased toward low complexity: residues threonine 69 to proline 81 and proline 120 to valine 143. Residues valine 146 to alanine 159 are compositionally biased toward polar residues. Low complexity predominate over residues serine 160–proline 194. Residues threonine 195–serine 205 show a composition bias toward polar residues. Residues cysteine 282–cysteine 307 form a GATA-type zinc finger.

In terms of assembly, interacts with HDA1.

Its subcellular location is the nucleus. Its function is as follows. Transcription factor required for hyphal growth, biofilm formation, and virulence. Promotes formation of both conventional and pheromone-stimulated biofilms. Binds and recruits HDA1 to promoters of hypha-specific genes in a rapamycin-dependent manner. Involved in the switch between two heritable states, the white and opaque states. These two cell types differ in many characteristics, including cell structure, mating competence, and virulence. Each state is heritable for many generations, and switching between states occurs stochastically at low frequency. The polypeptide is Biofilm regulator 1 (BRG1) (Candida albicans (strain SC5314 / ATCC MYA-2876) (Yeast)).